Consider the following 778-residue polypeptide: Endonuclease MutS2 (778 aa).

Position 328–335 (328–335) interacts with ATP; that stretch reads GPNTGGKT. The region spanning 702–777 is the Smr domain; that stretch reads LDLRGKRYEE…GSGATIVTFK (76 aa).

The protein belongs to the DNA mismatch repair MutS family. MutS2 subfamily. In terms of assembly, homodimer. Binds to stalled ribosomes, contacting rRNA.

Its function is as follows. Endonuclease that is involved in the suppression of homologous recombination and thus may have a key role in the control of bacterial genetic diversity. Acts as a ribosome collision sensor, splitting the ribosome into its 2 subunits. Detects stalled/collided 70S ribosomes which it binds and splits by an ATP-hydrolysis driven conformational change. Acts upstream of the ribosome quality control system (RQC), a ribosome-associated complex that mediates the extraction of incompletely synthesized nascent chains from stalled ribosomes and their subsequent degradation. Probably generates substrates for RQC. The sequence is that of Endonuclease MutS2 from Streptococcus pneumoniae (strain ATCC 700669 / Spain 23F-1).